Here is a 336-residue protein sequence, read N- to C-terminus: Glucokinase (336 aa).

12-17 (ADIGGT) contributes to the ATP binding site.

Belongs to the bacterial glucokinase family.

It localises to the cytoplasm. The enzyme catalyses D-glucose + ATP = D-glucose 6-phosphate + ADP + H(+). The protein is Glucokinase of Helicobacter pylori (strain J99 / ATCC 700824) (Campylobacter pylori J99).